Reading from the N-terminus, the 144-residue chain is Large-conductance mechanosensitive channel (144 aa).

2 helical membrane-spanning segments follow: residues 16 to 36 (VIDLAVGVIIGAAFGKIVDSV) and 86 to 106 (GNFLTIVVNFVILAFIIFLMV).

Belongs to the MscL family. Homopentamer.

The protein resides in the cell inner membrane. In terms of biological role, channel that opens in response to stretch forces in the membrane lipid bilayer. May participate in the regulation of osmotic pressure changes within the cell. The chain is Large-conductance mechanosensitive channel from Cupriavidus pinatubonensis (strain JMP 134 / LMG 1197) (Cupriavidus necator (strain JMP 134)).